A 140-amino-acid polypeptide reads, in one-letter code: Large ribosomal subunit protein uL11 (140 aa).

Belongs to the universal ribosomal protein uL11 family. As to quaternary structure, part of the ribosomal stalk of the 50S ribosomal subunit. Interacts with L10 and the large rRNA to form the base of the stalk. L10 forms an elongated spine to which L12 dimers bind in a sequential fashion forming a multimeric L10(L12)X complex. Post-translationally, one or more lysine residues are methylated.

Forms part of the ribosomal stalk which helps the ribosome interact with GTP-bound translation factors. In Staphylococcus epidermidis (strain ATCC 35984 / DSM 28319 / BCRC 17069 / CCUG 31568 / BM 3577 / RP62A), this protein is Large ribosomal subunit protein uL11.